A 204-amino-acid chain; its full sequence is Guanylate kinase (204 aa).

The 181-residue stretch at A16 to K196 folds into the Guanylate kinase-like domain. Position 23-30 (A23–S30) interacts with ATP.

This sequence belongs to the guanylate kinase family.

Its subcellular location is the cytoplasm. The enzyme catalyses GMP + ATP = GDP + ADP. In terms of biological role, essential for recycling GMP and indirectly, cGMP. The chain is Guanylate kinase from Bacteroides fragilis (strain ATCC 25285 / DSM 2151 / CCUG 4856 / JCM 11019 / LMG 10263 / NCTC 9343 / Onslow / VPI 2553 / EN-2).